Consider the following 376-residue polypeptide: Enoyl-[acyl-carrier-protein] reductase, mitochondrial (376 aa).

The transit peptide at 1–12 (MLRTLRTSQLAR) directs the protein to the mitochondrion. Tyr79 serves as the catalytic Proton donor. NADP(+) contacts are provided by residues Asn160, 183–186 (NSGV), 206–208 (RDR), 277–280 (YGGM), 302–304 (YWL), and Lys368.

This sequence belongs to the zinc-containing alcohol dehydrogenase family. Quinone oxidoreductase subfamily. Homodimer.

The protein resides in the mitochondrion matrix. The catalysed reaction is a 2,3-saturated acyl-[ACP] + NADP(+) = a (2E)-enoyl-[ACP] + NADPH + H(+). Functionally, catalyzes the NADPH-dependent reduction of trans-2-enoyl thioesters in mitochondrial fatty acid synthesis (fatty acid synthesis type II). Fatty acid chain elongation in mitochondria uses acyl carrier protein (ACP) as an acyl group carrier, but the enzyme accepts both ACP and CoA thioesters as substrates in vitro. Required for respiration and the maintenance of the mitochondrial compartment. The chain is Enoyl-[acyl-carrier-protein] reductase, mitochondrial (ETR1) from Yarrowia lipolytica (strain CLIB 122 / E 150) (Yeast).